The chain runs to 620 residues: Glutathione-regulated potassium-efflux system protein KefC (620 aa).

12 helical membrane passes run 4 to 24, 26 to 46, 54 to 74, 90 to 110, 114 to 134, 149 to 169, 178 to 198, 218 to 238, 270 to 290, 294 to 314, 327 to 347, and 359 to 379; these read HTLIQALIYLGSAALIVPIAV, LGLGSVLGYLIAGCIIGPWGL, SILHFAEIGVVLMLFIIGLEL, GALQMVICGGLLGLFCMLLGL, VAELIGMTLALSSTAIAMQAM, FAVLLFQDIAAIPLVAMIPLL, MGAFALSALKVAGALVLVVLL, VFSAVALFLVFGFGLLLEEVG, GLLLGLFFIGVGMSIDFGTLL, LRIVILLLGFLIIKIAMLWLI, WFAVLLGQGSEFAFVVFGTAQ, and SLTLAVALSMAATPILLVILN. Residues 399–518 enclose the RCK N-terminal domain; it reads QPRVIIAGFG…AGVEKPERET (120 aa). Residues 597-620 are disordered; it reads GWQGTEEGKHTGNMADEPETKPSS.

This sequence belongs to the monovalent cation:proton antiporter 2 (CPA2) transporter (TC 2.A.37) family. KefC subfamily. Homodimer. Interacts with the regulatory subunit KefF.

The protein resides in the cell inner membrane. Pore-forming subunit of a potassium efflux system that confers protection against electrophiles. Catalyzes K(+)/H(+) antiport. The polypeptide is Glutathione-regulated potassium-efflux system protein KefC (Shigella sonnei (strain Ss046)).